Here is a 479-residue protein sequence, read N- to C-terminus: Glycerol kinase 5 (479 aa).

Serine 20 and serine 21 together coordinate ATP. Arginine 90, aspartate 267, and glutamine 268 together coordinate glycerol. Threonine 289, glycine 332, and glycine 432 together coordinate ATP.

This sequence belongs to the FGGY kinase family.

It localises to the cytoplasm. It catalyses the reaction glycerol + ATP = sn-glycerol 3-phosphate + ADP + H(+). Its pathway is polyol metabolism; glycerol degradation via glycerol kinase pathway; sn-glycerol 3-phosphate from glycerol: step 1/1. Skin-specific kinase that plays a key role in glycerol metabolism, catalyzing its phosphorylation to produce sn-glycerol 3-phosphate. Involved in skin-specific regulation of sterol regulatory element-binding protein (SREBP) processing and lipid biosynthesis. The chain is Glycerol kinase 5 (gk5) from Xenopus laevis (African clawed frog).